The following is a 169-amino-acid chain: Cell cycle link protein (169 aa).

The segment at 9 to 22 (LPEELRQKIVHDHL) is binding to host SKP1 protein. Positions 110-114 (LLCRE) match the LXCXE motif, interaction with host RBR motif.

The protein belongs to the nanovirus Clink protein family. Interacts with host SKP1. Interacts (via LXCXE domain) with host retinoblastoma-related protein 1 (RBR1). Interacts (via LXCXE domain) with retinoblastoma-related proteins (RBR).

Functionally, interacts with and disrupts the function of host retinoblastoma-related proteins RBR, which are key regulators of the cell cycle. Induces transcriptional activation of E2F-regulated S-phase and G2/M-phase-specific genes. Inactivation of the ability of RBR to arrest the cell cycle leads to the stimulation of viral DNA replication. This chain is Cell cycle link protein (DNA-C), found in Cicer arietinum (Chickpea).